A 648-amino-acid polypeptide reads, in one-letter code: 1-deoxy-D-xylulose-5-phosphate synthase (648 aa).

Residues His79 and 120 to 122 contribute to the thiamine diphosphate site; that span reads GHA. Asp152 contacts Mg(2+). Residues 153-154, Asn181, Phe293, and Glu377 each bind thiamine diphosphate; that span reads GS. Residue Asn181 coordinates Mg(2+).

It belongs to the transketolase family. DXPS subfamily. Homodimer. The cofactor is Mg(2+). Thiamine diphosphate serves as cofactor.

It catalyses the reaction D-glyceraldehyde 3-phosphate + pyruvate + H(+) = 1-deoxy-D-xylulose 5-phosphate + CO2. The protein operates within metabolic intermediate biosynthesis; 1-deoxy-D-xylulose 5-phosphate biosynthesis; 1-deoxy-D-xylulose 5-phosphate from D-glyceraldehyde 3-phosphate and pyruvate: step 1/1. Functionally, catalyzes the acyloin condensation reaction between C atoms 2 and 3 of pyruvate and glyceraldehyde 3-phosphate to yield 1-deoxy-D-xylulose-5-phosphate (DXP). In Bacteroides fragilis (strain ATCC 25285 / DSM 2151 / CCUG 4856 / JCM 11019 / LMG 10263 / NCTC 9343 / Onslow / VPI 2553 / EN-2), this protein is 1-deoxy-D-xylulose-5-phosphate synthase.